Consider the following 244-residue polypeptide: Protein crossbronx (244 aa).

Residues 20–176 enclose the UBC core domain; sequence QQEYKILAEY…VQENIKESKE (157 aa). The disordered stretch occupies residues 209 to 244; it reads AGRSKQTEPSAQQGNGGHATGLSWVKEGEFKPLSIE.

The protein belongs to the ubiquitin-conjugating enzyme family. FTS subfamily.

The chain is Protein crossbronx (cbx) from Drosophila simulans (Fruit fly).